The primary structure comprises 119 residues: Membrane-anchored ubiquitin-fold protein 3 (119 aa).

The Ubiquitin-like domain maps to 8–76 (IEVKFRLFDG…NNRTLAESRV (69 aa)). C116 is subject to Cysteine methyl ester. A lipid anchor (S-geranylgeranyl cysteine) is attached at C116. The propeptide at 117 to 119 (TIL) is removed in mature form.

It localises to the cell membrane. May serve as docking site to facilitate the association of other proteins to the plasma membrane. In Oryza sativa subsp. japonica (Rice), this protein is Membrane-anchored ubiquitin-fold protein 3 (MUB3).